The following is a 314-amino-acid chain: Epithelial cell adhesion molecule (314 aa).

The N-terminal stretch at 1-23 is a signal peptide; that stretch reads MAPPQVLAFGLLLAAATATFAAA. Over 24 to 265 the chain is Extracellular; that stretch reads QEECVCENYK…APEFSMQGLK (242 aa). 6 cysteine pairs are disulfide-bonded: cysteine 27-cysteine 46, cysteine 29-cysteine 59, cysteine 38-cysteine 48, cysteine 66-cysteine 99, cysteine 110-cysteine 116, and cysteine 118-cysteine 135. Positions 63–135 constitute a Thyroglobulin type-1 domain; it reads AAKCLVMKAE…RTDKDTEITC (73 aa). Asparagine 74 carries an N-linked (GlcNAc...) asparagine; partial glycan. Asparagine 111 carries N-linked (GlcNAc...) asparagine glycosylation. An N-linked (GlcNAc...) asparagine glycan is attached at asparagine 198. The chain crosses the membrane as a helical span at residues 266-288; the sequence is AGVIAVIVVVVIAVVAGIVVLVI. Residues 289–314 are Cytoplasmic-facing; that stretch reads SRKKRMAKYEKAEIKEMGEMHRELNA.

The protein belongs to the EPCAM family. In terms of assembly, monomer. Interacts with phosphorylated CLDN7. In terms of processing, hyperglycosylated in carcinoma tissue as compared with autologous normal epithelia. Glycosylation at Asn-198 is crucial for protein stability. As to expression, highly and selectively expressed by undifferentiated rather than differentiated embryonic stem cells (ESC). Levels rapidly diminish as soon as ESC's differentiate (at protein levels). Expressed in almost all epithelial cell membranes but not on mesodermal or neural cell membranes. Found on the surface of adenocarcinoma.

Its subcellular location is the lateral cell membrane. The protein resides in the cell junction. The protein localises to the tight junction. In terms of biological role, may act as a physical homophilic interaction molecule between intestinal epithelial cells (IECs) and intraepithelial lymphocytes (IELs) at the mucosal epithelium for providing immunological barrier as a first line of defense against mucosal infection. Plays a role in embryonic stem cells proliferation and differentiation. Up-regulates the expression of FABP5, MYC and cyclins A and E. This chain is Epithelial cell adhesion molecule (EPCAM), found in Homo sapiens (Human).